The chain runs to 147 residues: Hemoglobin subunit epsilon-4 (147 aa).

Residues 3-147 (HFTTEEKAAV…VANALAHKYH (145 aa)) enclose the Globin domain. The heme b site is built by H64 and H93.

The protein belongs to the globin family. As to expression, red blood cells.

Hemoglobin epsilon chain is a beta-type chain found in early embryos. The polypeptide is Hemoglobin subunit epsilon-4 (HBE4) (Bos taurus (Bovine)).